Consider the following 415-residue polypeptide: Serine hydroxymethyltransferase (415 aa).

Residues Leu-117 and Gly-121 to Leu-123 contribute to the (6S)-5,6,7,8-tetrahydrofolate site. Lys-226 is modified (N6-(pyridoxal phosphate)lysine). Ser-349–Phe-351 lines the (6S)-5,6,7,8-tetrahydrofolate pocket.

This sequence belongs to the SHMT family. Homodimer. Pyridoxal 5'-phosphate is required as a cofactor.

Its subcellular location is the cytoplasm. The enzyme catalyses (6R)-5,10-methylene-5,6,7,8-tetrahydrofolate + glycine + H2O = (6S)-5,6,7,8-tetrahydrofolate + L-serine. It functions in the pathway one-carbon metabolism; tetrahydrofolate interconversion. It participates in amino-acid biosynthesis; glycine biosynthesis; glycine from L-serine: step 1/1. Catalyzes the reversible interconversion of serine and glycine with tetrahydrofolate (THF) serving as the one-carbon carrier. This reaction serves as the major source of one-carbon groups required for the biosynthesis of purines, thymidylate, methionine, and other important biomolecules. Also exhibits THF-independent aldolase activity toward beta-hydroxyamino acids, producing glycine and aldehydes, via a retro-aldol mechanism. This chain is Serine hydroxymethyltransferase, found in Geobacter sp. (strain M21).